Here is a 439-residue protein sequence, read N- to C-terminus: ATP-dependent RNA helicase RhlB (439 aa).

The Q motif signature appears at 9-37; it reads QKFADLPLHPEVKQALAENGFEFCTPIQA. Residues 40–219 enclose the Helicase ATP-binding domain; sequence LPVLLQSKDI…YDHMNDPVKV (180 aa). ATP is bound at residue 53-60; sequence AQTGTGKT. The DEAD box motif lies at 165–168; it reads DEAD. The 148-residue stretch at 243–390 folds into the Helicase C-terminal domain; it reads KIRLLLTLIE…VSNYDRDALL (148 aa). The interval 395–439 is disordered; the sequence is PPVKIHRKHPAGARNLRERSGAGRPQGAHRSGGRPPRHDRTRRQP. A compositionally biased stretch (basic residues) spans 425–439; sequence SGGRPPRHDRTRRQP.

The protein belongs to the DEAD box helicase family. RhlB subfamily. Component of the RNA degradosome, which is a multiprotein complex involved in RNA processing and mRNA degradation.

The protein localises to the cytoplasm. It carries out the reaction ATP + H2O = ADP + phosphate + H(+). Functionally, DEAD-box RNA helicase involved in RNA degradation. Has RNA-dependent ATPase activity and unwinds double-stranded RNA. This chain is ATP-dependent RNA helicase RhlB, found in Shewanella sp. (strain MR-4).